The sequence spans 157 residues: Glycine/sarcosine/betaine reductase complex component A (157 aa).

U44 is an active-site residue. U44 is a non-standard amino acid (selenocysteine).

This sequence belongs to the GrdA family. As to quaternary structure, monomer. Component of the glycine, sarcosine and betaine reductase complexes, together with components B and C.

It carries out the reaction acetyl phosphate + [thioredoxin]-disulfide + NH4(+) + H2O = [thioredoxin]-dithiol + glycine + phosphate + H(+). It catalyses the reaction acetyl phosphate + methylamine + [thioredoxin]-disulfide + H2O = sarcosine + [thioredoxin]-dithiol + phosphate + H(+). The enzyme catalyses acetyl phosphate + trimethylamine + [thioredoxin]-disulfide + H2O = glycine betaine + [thioredoxin]-dithiol + phosphate + H(+). Functionally, in the first step of glycine, betaine and sarcosine reductases, the substrate is bound to component PB via a Schiff base intermediate. Then the PB-activated substrate is nucleophilically attacked by the selenol anion of component PA to transform it to a carboxymethylated selenoether and the respective amine. By action of component PC, acetyl phosphate is formed, leaving component PA in its oxidized state. Finally component PA becomes reduced by the thioredoxin system to start a new catalytic cycle of reductive deamination. This Treponema denticola (strain ATCC 35405 / DSM 14222 / CIP 103919 / JCM 8153 / KCTC 15104) protein is Glycine/sarcosine/betaine reductase complex component A (grdA).